The chain runs to 86 residues: Cell division topological specificity factor (86 aa).

It belongs to the MinE family.

In terms of biological role, prevents the cell division inhibition by proteins MinC and MinD at internal division sites while permitting inhibition at polar sites. This ensures cell division at the proper site by restricting the formation of a division septum at the midpoint of the long axis of the cell. This is Cell division topological specificity factor from Allorhizobium ampelinum (strain ATCC BAA-846 / DSM 112012 / S4) (Agrobacterium vitis (strain S4)).